A 1544-amino-acid polypeptide reads, in one-letter code: Lysophospholipase NTE1 (1544 aa).

The Cytoplasmic segment spans residues 1–37 (MSTIEIVSTVAEYTEIHSPVSSKFLLPSARDSSSSIS). Residues 38–58 (LFSAIFWFWSWLFFKIMNIFL) traverse the membrane as a helical segment. Topologically, residues 59 to 76 (YYIPNIIVNLFSVNFQIT) are lumenal. Residues 77–97 (LSLSSIVITLTGIISFCFLIV) form a helical membrane-spanning segment. Topologically, residues 98–1544 (RYKYLTRYSK…RKSLYRRSSI (1447 aa)) are cytoplasmic. Disordered regions lie at residues 265-312 (RLFS…RNYP) and 424-552 (ESPS…EETE). Over residues 275-310 (NPASNPLSPDNTGSKSFDPLSSGNFNDTSLSSSDRN) the composition is skewed to polar residues. Residues 425 to 447 (SPSVSINKTSSSSSSLPKKSTTS) are compositionally biased toward low complexity. 2 stretches are compositionally biased toward polar residues: residues 448-458 (LRPLNRNQSSR) and 517-536 (QISS…TTKF). The segment covering 537–546 (ENIRDRTFSD) has biased composition (basic and acidic residues). A nucleoside 3',5'-cyclic phosphate contacts are provided by residues 681-811 (SFES…LKSL) and 807-960 (KLKS…VANK). Residues 1237-1401 (LVLGGGGSRG…LDNLPVMEMK (165 aa)) enclose the PNPLA domain. A GXGXXG motif is present at residues 1241–1246 (GGGSRG). Residues 1268 to 1272 (GTSIG) carry the GXSXG motif. Catalysis depends on Ser1270, which acts as the Nucleophile. Asp1388 functions as the Proton acceptor in the catalytic mechanism. The short motif at 1388–1390 (DGG) is the DGA/G element.

It belongs to the NTE family.

The protein localises to the endoplasmic reticulum membrane. The enzyme catalyses a 1-acyl-sn-glycero-3-phosphocholine + H2O = sn-glycerol 3-phosphocholine + a fatty acid + H(+). With respect to regulation, inhibited by organophosphorus esters. Functionally, intracellular phospholipase B that catalyzes the double deacylation of phosphatidylcholine (PC) to glycerophosphocholine (GroPCho). Plays an important role in membrane lipid homeostasis. Responsible for the rapid PC turnover in response to inositol, elevated temperatures, or when choline is present in the growth medium. The sequence is that of Lysophospholipase NTE1 (NTE1) from Debaryomyces hansenii (strain ATCC 36239 / CBS 767 / BCRC 21394 / JCM 1990 / NBRC 0083 / IGC 2968) (Yeast).